The sequence spans 122 residues: Large ribosomal subunit protein uL14 (122 aa).

The protein belongs to the universal ribosomal protein uL14 family. Part of the 50S ribosomal subunit. Forms a cluster with proteins L3 and L19. In the 70S ribosome, L14 and L19 interact and together make contacts with the 16S rRNA in bridges B5 and B8.

Its function is as follows. Binds to 23S rRNA. Forms part of two intersubunit bridges in the 70S ribosome. The chain is Large ribosomal subunit protein uL14 from Neisseria gonorrhoeae (strain ATCC 700825 / FA 1090).